The following is a 671-amino-acid chain: DNA ligase (671 aa).

NAD(+) is bound by residues 32–36 (DAEYD), 81–82 (SL), and glutamate 113. The active-site N6-AMP-lysine intermediate is the lysine 115. 4 residues coordinate NAD(+): arginine 136, glutamate 173, lysine 290, and lysine 314. Residues cysteine 408, cysteine 411, cysteine 426, and cysteine 432 each coordinate Zn(2+). Residues 593-671 (EIDSPFAGKT…EAEMMRLLGE (79 aa)) form the BRCT domain.

This sequence belongs to the NAD-dependent DNA ligase family. LigA subfamily. Mg(2+) serves as cofactor. The cofactor is Mn(2+).

The catalysed reaction is NAD(+) + (deoxyribonucleotide)n-3'-hydroxyl + 5'-phospho-(deoxyribonucleotide)m = (deoxyribonucleotide)n+m + AMP + beta-nicotinamide D-nucleotide.. In terms of biological role, DNA ligase that catalyzes the formation of phosphodiester linkages between 5'-phosphoryl and 3'-hydroxyl groups in double-stranded DNA using NAD as a coenzyme and as the energy source for the reaction. It is essential for DNA replication and repair of damaged DNA. The chain is DNA ligase from Klebsiella pneumoniae (strain 342).